The sequence spans 104 residues: Small ribosomal subunit protein uS10 (104 aa).

This sequence belongs to the universal ribosomal protein uS10 family. As to quaternary structure, part of the 30S ribosomal subunit.

Functionally, involved in the binding of tRNA to the ribosomes. The protein is Small ribosomal subunit protein uS10 of Alkaliphilus oremlandii (strain OhILAs) (Clostridium oremlandii (strain OhILAs)).